The primary structure comprises 193 residues: Holliday junction branch migration complex subunit RuvA (193 aa).

Positions 1-63 (MYAYLKGKIM…EDAQLLYGFK (63 aa)) are domain I. The segment at 64–141 (DEEEKAMFNA…TITDESELFK (78 aa)) is domain II. A flexible linker region spans residues 141 to 142 (KE). The segment at 143–193 (VNDTLLNEALLAFEALGYSKREITKIEKELKKKQFSTVDEYVKQGLQMFVS) is domain III.

Belongs to the RuvA family. In terms of assembly, homotetramer. Forms an RuvA(8)-RuvB(12)-Holliday junction (HJ) complex. HJ DNA is sandwiched between 2 RuvA tetramers; dsDNA enters through RuvA and exits via RuvB. An RuvB hexamer assembles on each DNA strand where it exits the tetramer. Each RuvB hexamer is contacted by two RuvA subunits (via domain III) on 2 adjacent RuvB subunits; this complex drives branch migration. In the full resolvosome a probable DNA-RuvA(4)-RuvB(12)-RuvC(2) complex forms which resolves the HJ.

It is found in the cytoplasm. Functionally, the RuvA-RuvB-RuvC complex processes Holliday junction (HJ) DNA during genetic recombination and DNA repair, while the RuvA-RuvB complex plays an important role in the rescue of blocked DNA replication forks via replication fork reversal (RFR). RuvA specifically binds to HJ cruciform DNA, conferring on it an open structure. The RuvB hexamer acts as an ATP-dependent pump, pulling dsDNA into and through the RuvAB complex. HJ branch migration allows RuvC to scan DNA until it finds its consensus sequence, where it cleaves and resolves the cruciform DNA. This is Holliday junction branch migration complex subunit RuvA from Macrococcus caseolyticus (strain JCSC5402) (Macrococcoides caseolyticum).